Reading from the N-terminus, the 105-residue chain is Replication restart protein PriB (105 aa).

The region spanning M1–D102 is the SSB domain.

The protein belongs to the PriB family. As to quaternary structure, homodimer. Interacts with PriA and DnaT. Component of the replication restart primosome. Primosome assembly occurs via a 'hand-off' mechanism. PriA binds to replication forks, subsequently PriB then DnaT bind; DnaT then displaces ssDNA to generate the helicase loading substrate.

Its function is as follows. Involved in the restart of stalled replication forks, which reloads the replicative helicase on sites other than the origin of replication; the PriA-PriB pathway is the major replication restart pathway. During primosome assembly it facilitates complex formation between PriA and DnaT on DNA; stabilizes PriA on DNA. Stimulates the DNA unwinding activity of PriA helicase. The polypeptide is Replication restart protein PriB (Serratia proteamaculans (strain 568)).